The sequence spans 296 residues: 4-hydroxybenzoate octaprenyltransferase (296 aa).

8 consecutive transmembrane segments (helical) span residues 28–48, 55–75, 102–122, 145–167, 174–196, 219–239, 241–261, and 275–295; these read PIGI…AGNG, VLIF…INDF, AVML…CTNA, TYYP…FTAA, SAWL…YAMV, VIIL…GNRF, LGGW…WEFW, and FLHN…DYAL.

Belongs to the UbiA prenyltransferase family. Mg(2+) serves as cofactor.

The protein localises to the cell inner membrane. The catalysed reaction is all-trans-octaprenyl diphosphate + 4-hydroxybenzoate = 4-hydroxy-3-(all-trans-octaprenyl)benzoate + diphosphate. Its pathway is cofactor biosynthesis; ubiquinone biosynthesis. Functionally, catalyzes the prenylation of para-hydroxybenzoate (PHB) with an all-trans polyprenyl group. Mediates the second step in the final reaction sequence of ubiquinone-8 (UQ-8) biosynthesis, which is the condensation of the polyisoprenoid side chain with PHB, generating the first membrane-bound Q intermediate 3-octaprenyl-4-hydroxybenzoate. The chain is 4-hydroxybenzoate octaprenyltransferase from Pseudomonas entomophila (strain L48).